The following is a 308-amino-acid chain: Mycothiol acetyltransferase (308 aa).

N-acetyltransferase domains follow at residues 8–155 (RDVD…PRLR) and 160–308 (VQVR…RRAR). E39 lines the 1D-myo-inositol 2-(L-cysteinylamino)-2-deoxy-alpha-D-glucopyranoside pocket. 84–86 (LVV) is a binding site for acetyl-CoA. Residues E187, K226, and E240 each coordinate 1D-myo-inositol 2-(L-cysteinylamino)-2-deoxy-alpha-D-glucopyranoside. Acetyl-CoA contacts are provided by residues 244-246 (LGI) and 251-257 (QGLGLGR). Position 278 (Y278) interacts with 1D-myo-inositol 2-(L-cysteinylamino)-2-deoxy-alpha-D-glucopyranoside.

The protein belongs to the acetyltransferase family. MshD subfamily. In terms of assembly, monomer.

The catalysed reaction is 1D-myo-inositol 2-(L-cysteinylamino)-2-deoxy-alpha-D-glucopyranoside + acetyl-CoA = mycothiol + CoA + H(+). Functionally, catalyzes the transfer of acetyl from acetyl-CoA to desacetylmycothiol (Cys-GlcN-Ins) to form mycothiol. In Geodermatophilus obscurus (strain ATCC 25078 / DSM 43160 / JCM 3152 / CCUG 61914 / KCC A-0152 / KCTC 9177 / NBRC 13315 / NRRL B-3577 / G-20), this protein is Mycothiol acetyltransferase.